The following is a 79-amino-acid chain: Cell division protein ZapB (79 aa).

Positions 6–78 form a coiled coil; sequence FEKLEVKVQQ…LRALLGKMEE (73 aa).

The protein belongs to the ZapB family. In terms of assembly, homodimer. The ends of the coiled-coil dimer bind to each other, forming polymers. Interacts with FtsZ.

The protein resides in the cytoplasm. Non-essential, abundant cell division factor that is required for proper Z-ring formation. It is recruited early to the divisome by direct interaction with FtsZ, stimulating Z-ring assembly and thereby promoting cell division earlier in the cell cycle. Its recruitment to the Z-ring requires functional FtsA or ZipA. In Yersinia enterocolitica serotype O:8 / biotype 1B (strain NCTC 13174 / 8081), this protein is Cell division protein ZapB.